A 506-amino-acid chain; its full sequence is CDK5 regulatory subunit-associated protein 3 (506 aa).

3 consecutive short sequence motifs (shuffled ATG8-binding motif) follow at residues 267-270 (IDWG), 292-295 (IDWG), and 310-313 (IDWG). Residues 269 to 506 (WGDFGVEAVS…RPVNLMGTSL (238 aa)) are required for interaction with UFL1 and mediates interaction with CHEK1. The RPL10a-binding domain (RBD) stretch occupies residues 355–370 (DELMELEIFLARRAVE). K450 is covalently cross-linked (Glycyl lysine isopeptide (Lys-Gly) (interchain with G-Cter in SUMO2)).

This sequence belongs to the CDK5RAP3 family. Substrate adapter component of the UFM1 ribosome E3 ligase (UREL) complex, composed of UFL1, DDRGK1 and CDK5RAP3. Interaction with UFL1 anchors CDK5RAP3 in the cytoplasm, preventing its translocation to the nucleus which allows expression of the CCND1 cyclin and progression of cells through the G1/S transition. Interacts with ATG8 family proteins MAP1LC3A, MAP1LC3B, GABARAP, GABARAPL1 and GABARAPL2. Interacts with CDK5R1; competes with CDK5RAP1 and CDK5RAP2. Interacts with RELA. Interacts with CHEK1; may negatively regulate CHEK1 and thereby stimulate entry into mitosis. Interacts with CDKN2A/ARF and MDM2; forms a ternary complex involved in regulation of p53/TP53. Interacts with MAPK14. Interacts with CCNB1. Interacts with TUBG1; may regulate CDK5RAP3 in mitotic G2/M transition checkpoint. Post-translationally, may be phosphorylated by CDK5. Ubiquitinated. Probably triggers proteasomal degradation and is negatively regulated by UFL1. In terms of processing, may be ufmylated. Post-translationally, cleaved by caspases early during apoptosis, the resulting peptides may play a role in rupture of the nuclear envelope.

The protein resides in the endoplasmic reticulum membrane. Its subcellular location is the cytoplasm. The protein localises to the nucleus. It is found in the cytoskeleton. It localises to the microtubule organizing center. The protein resides in the centrosome. Functionally, substrate adapter of E3 ligase complexes mediating ufmylation, the covalent attachment of the ubiquitin-like modifier UFM1 to substrate proteins, and which is involved in various processes, such as ribosome recycling and reticulophagy (also called ER-phagy). As part of the UREL complex, plays a key role in ribosome recycling by promoting mono-ufmylation of RPL26/uL24 subunit of the 60S ribosome. Ufmylation of RPL26/uL24 occurs on free 60S ribosomes following ribosome dissociation: it weakens the junction between post-termination 60S subunits and SEC61 translocons, promoting release and recycling of the large ribosomal subunit from the endoplasmic reticulum membrane. Ufmylation of RPL26/uL24 and subsequent 60S ribosome recycling either take place after normal termination of translation or after ribosome stalling during cotranslational translocation at the endoplasmic reticulum. Within the UREL complex, CDK5RAP3 acts as a substrate adapter that constrains UFL1 ligase activity to mono-ufmylate RPL26/uL24 at 'Lys-134'. The UREL complex is also involved in reticulophagy in response to endoplasmic reticulum stress by promoting ufmylation of proteins such as CYB5R3, thereby promoting lysosomal degradation of ufmylated proteins. Also acts as a regulator of transcription: negatively regulates NF-kappa-B-mediated gene transcription through the control of RELA phosphorylation. Also regulates mitotic G2/M transition checkpoint and mitotic G2 DNA damage checkpoint. Through its interaction with CDKN2A/ARF and MDM2 may induce MDM2-dependent p53/TP53 ubiquitination, stabilization and activation in the nucleus, thereby promoting G1 cell cycle arrest and inhibition of cell proliferation. May also play a role in the rupture of the nuclear envelope during apoptosis. May regulate MAPK14 activity by regulating its dephosphorylation by PPM1D/WIP1. Required for liver development. This Pongo abelii (Sumatran orangutan) protein is CDK5 regulatory subunit-associated protein 3.